A 336-amino-acid polypeptide reads, in one-letter code: Glyceraldehyde-3-phosphate dehydrogenase (336 aa).

NAD(+) contacts are provided by residues 12–13 (RI), D34, R78, and T121. D-glyceraldehyde 3-phosphate-binding positions include 151–153 (SCT), T182, R199, 212–213 (TG), and R235. Catalysis depends on C152, which acts as the Nucleophile. An NAD(+)-binding site is contributed by N316.

It belongs to the glyceraldehyde-3-phosphate dehydrogenase family. In terms of assembly, homotetramer.

It localises to the cytoplasm. The enzyme catalyses D-glyceraldehyde 3-phosphate + phosphate + NAD(+) = (2R)-3-phospho-glyceroyl phosphate + NADH + H(+). Its pathway is carbohydrate degradation; glycolysis; pyruvate from D-glyceraldehyde 3-phosphate: step 1/5. Functionally, also binds human plasminogen. Its function is as follows. Catalyzes the oxidative phosphorylation of glyceraldehyde 3-phosphate (G3P) to 1,3-bisphosphoglycerate (BPG) using the cofactor NAD. The first reaction step involves the formation of a hemiacetal intermediate between G3P and a cysteine residue, and this hemiacetal intermediate is then oxidized to a thioester, with concomitant reduction of NAD to NADH. The reduced NADH is then exchanged with the second NAD, and the thioester is attacked by a nucleophilic inorganic phosphate to produce BPG. This is Glyceraldehyde-3-phosphate dehydrogenase (gap) from Streptococcus pyogenes.